Consider the following 255-residue polypeptide: 4-hydroxy-tetrahydrodipicolinate reductase (255 aa).

NAD(+)-binding positions include 9-14, 89-91, and 115-118; these read GFKGKM, GTT, and APNF. Histidine 145 acts as the Proton donor/acceptor in catalysis. Histidine 146 is a (S)-2,3,4,5-tetrahydrodipicolinate binding site. Residue lysine 149 is the Proton donor of the active site. 155–156 contributes to the (S)-2,3,4,5-tetrahydrodipicolinate binding site; the sequence is GT.

This sequence belongs to the DapB family.

The protein resides in the cytoplasm. It carries out the reaction (S)-2,3,4,5-tetrahydrodipicolinate + NAD(+) + H2O = (2S,4S)-4-hydroxy-2,3,4,5-tetrahydrodipicolinate + NADH + H(+). The enzyme catalyses (S)-2,3,4,5-tetrahydrodipicolinate + NADP(+) + H2O = (2S,4S)-4-hydroxy-2,3,4,5-tetrahydrodipicolinate + NADPH + H(+). The protein operates within amino-acid biosynthesis; L-lysine biosynthesis via DAP pathway; (S)-tetrahydrodipicolinate from L-aspartate: step 4/4. In terms of biological role, catalyzes the conversion of 4-hydroxy-tetrahydrodipicolinate (HTPA) to tetrahydrodipicolinate. The sequence is that of 4-hydroxy-tetrahydrodipicolinate reductase from Streptococcus suis (strain 98HAH33).